The primary structure comprises 336 residues: Methionyl-tRNA formyltransferase (336 aa).

112–115 (SILP) contributes to the (6S)-5,6,7,8-tetrahydrofolate binding site.

This sequence belongs to the Fmt family.

The catalysed reaction is L-methionyl-tRNA(fMet) + (6R)-10-formyltetrahydrofolate = N-formyl-L-methionyl-tRNA(fMet) + (6S)-5,6,7,8-tetrahydrofolate + H(+). In terms of biological role, attaches a formyl group to the free amino group of methionyl-tRNA(fMet). The formyl group appears to play a dual role in the initiator identity of N-formylmethionyl-tRNA by promoting its recognition by IF2 and preventing the misappropriation of this tRNA by the elongation apparatus. This chain is Methionyl-tRNA formyltransferase, found in Trichodesmium erythraeum (strain IMS101).